Reading from the N-terminus, the 414-residue chain is HERV-H LTR-associating protein 2 (414 aa).

The first 22 residues, 1–22 (MKAQTALSFFLILITSLSGSQG), serve as a signal peptide directing secretion. The region spanning 61–131 (IHWKYQDSYK…YVGTAIQVIT (71 aa)) is the Ig-like V-type 1 domain. 2 N-linked (GlcNAc...) asparagine glycosylation sites follow: Asn90 and Asn103. The Ig-like C1-type domain maps to 138–222 (VGVFLTPVMK…ENSLLKQTWT (85 aa)). 2 cysteine pairs are disulfide-bonded: Cys159–Cys210 and Cys243–Cys317. Residues 235-328 (QSEHVSLSCQ…ISSDEYTLLT (94 aa)) enclose the Ig-like V-type 2 domain. An N-linked (GlcNAc...) asparagine glycan is attached at Asn318. The helical transmembrane segment at 345 to 365 (KGLWILVPSAILAAFLLIWSV) threads the bilayer. The segment at 383-414 (GAQQERCCVPPGERCPSAPDNGEENVPLSGKV) is disordered.

Interacts with TMIGD2. In terms of tissue distribution, expressed at high levels in colon, kidney, testis, lung and pancreas, and at lower levels in small intestine, liver and skeletal muscle. In immune cells, highly expressed in B-cells, dendritic cells and macrophages. Not detected in T-cells.

The protein localises to the membrane. Through interaction with TMIGD2, costimulates T-cells in the context of TCR-mediated activation. Enhances T-cell proliferation and cytokine production via an AKT-dependent signaling cascade. The chain is HERV-H LTR-associating protein 2 (HHLA2) from Homo sapiens (Human).